The sequence spans 379 residues: Actin, cytoplasmic (379 aa).

It belongs to the actin family.

It localises to the cytoplasm. The protein resides in the cytoskeleton. The enzyme catalyses ATP + H2O = ADP + phosphate + H(+). In terms of biological role, actins are highly conserved proteins that are involved in various types of cell motility and are ubiquitously expressed in all eukaryotic cells. The polypeptide is Actin, cytoplasmic (Euplotes crassus).